The primary structure comprises 976 residues: Vacuolar membrane protease (976 aa).

The Cytoplasmic portion of the chain corresponds to 1–15 (MKLKSVFRSVLKYRK). A helical membrane pass occupies residues 16 to 36 (TNLSLLLLITYSIITLLYIFD). Over 37–359 (HERYKLNLPK…KFFVISAKTL (323 aa)) the chain is Vacuolar. Residues N96 and N121 are each glycosylated (N-linked (GlcNAc...) asparagine). Zn(2+) is bound by residues H156 and D168. N-linked (GlcNAc...) asparagine glycosylation occurs at N189. Residue E200 is the Proton acceptor of the active site. A Zn(2+)-binding site is contributed by E201. N-linked (GlcNAc...) asparagine glycans are attached at residues N212 and N217. E226 and H300 together coordinate Zn(2+). The chain crosses the membrane as a helical span at residues 360–380 (FYWNCIFLLVSPVVAIGLYLI). The Cytoplasmic segment spans residues 381–392 (SRDRMTWKSHSW). The chain crosses the membrane as a helical span at residues 393-412 (LSWTRFPLSLAAGIIVQKLF). The Vacuolar portion of the chain corresponds to 413–428 (SNDIIRSNPLTFSRNY). Residues 429–449 (FWPISAFFTQVIFTSYVLINC) form a helical membrane-spanning segment. The Cytoplasmic portion of the chain corresponds to 450–461 (SNFFFPCADMKS). A helical membrane pass occupies residues 462–482 (LSIIELFIILWTILLFTSKLL). Residues 483–496 (YSSDYRYTGLYPLS) are Vacuolar-facing. A helical transmembrane segment spans residues 497–517 (IFFLLSTIAAILRLLALALGM). Over 518–627 (RTRKRLGREC…NSLKLEYTDY (110 aa)) the chain is Cytoplasmic. Residues 528–610 (RDHHSNYSSH…PLLKGSNSME (83 aa)) form a disordered region. Residues 549–558 (NLEQPQDQFT) show a composition bias toward polar residues. The segment covering 559 to 570 (SSQDDQASIQDD) has biased composition (low complexity). Basic and acidic residues predominate over residues 582–601 (NVDEDHGMDSSSQQHDERVP). A helical transmembrane segment spans residues 628–648 (AWIIQFLLIVPIPSFILFNSV). Topologically, residues 649–668 (DVIMDALNHTVQEGSKATFD) are vacuolar. An N-linked (GlcNAc...) asparagine glycan is attached at N656. Residues 669 to 689 (VLRFGMVGSILMALPILPFFY) traverse the membrane as a helical segment. The Cytoplasmic segment spans residues 690–692 (KVN). Residues 693 to 713 (YITISLTALLFLISASKTLLV) traverse the membrane as a helical segment. The Vacuolar portion of the chain corresponds to 714–976 (HPFTNSNPLK…LVIVKDAIIL (263 aa)). N-linked (GlcNAc...) asparagine glycosylation is found at N768, N796, N811, N866, and N937.

It belongs to the peptidase M28 family. It depends on Zn(2+) as a cofactor.

It localises to the vacuole membrane. In terms of biological role, may be involved in vacuolar sorting and osmoregulation. The polypeptide is Vacuolar membrane protease (Saccharomyces cerevisiae (strain YJM789) (Baker's yeast)).